Reading from the N-terminus, the 530-residue chain is Tegument protein UL21 homolog (530 aa).

Belongs to the alphaherpesvirinae UL21 protein family. As to quaternary structure, interacts (via C-terminus) with UL16.

The protein resides in the virion tegument. Its subcellular location is the host cytoplasm. It is found in the host nucleus. May participate in DNA packaging/capsid maturation events. Promotes efficient incorporation of tegument proteins UL46, UL49, and US3 homologs into virions. May also play a role in capsid transport to the trans-Golgi network (TGN). This is Tegument protein UL21 homolog from Equus caballus (Horse).